The chain runs to 179 residues: Isopentenyl-diphosphate Delta-isomerase (179 aa).

Residues His25 and His31 each coordinate Mn(2+). In terms of domain architecture, Nudix hydrolase spans 29 to 161 (ELHRAITVYI…PEQFTAWFQL (133 aa)). The active site involves Cys66. Cys66 is a Mg(2+) binding site. His68 lines the Mn(2+) pocket. Glu86 serves as a coordination point for Mg(2+). The Mn(2+) site is built by Glu111 and Glu113. Glu113 is an active-site residue.

It belongs to the IPP isomerase type 1 family. Homodimer. It depends on Mg(2+) as a cofactor. Mn(2+) is required as a cofactor.

The protein resides in the cytoplasm. It carries out the reaction isopentenyl diphosphate = dimethylallyl diphosphate. The protein operates within isoprenoid biosynthesis; dimethylallyl diphosphate biosynthesis; dimethylallyl diphosphate from isopentenyl diphosphate: step 1/1. In terms of biological role, catalyzes the 1,3-allylic rearrangement of the homoallylic substrate isopentenyl (IPP) to its highly electrophilic allylic isomer, dimethylallyl diphosphate (DMAPP). The chain is Isopentenyl-diphosphate Delta-isomerase from Pectobacterium atrosepticum (strain SCRI 1043 / ATCC BAA-672) (Erwinia carotovora subsp. atroseptica).